A 138-amino-acid chain; its full sequence is MAKPIPRIGSQRNRRINSRKNARKMPKGVIYVQAGFNNTIVTVTDVRGRVVSWASAGTCGFKGAKRGTPFAAQTAAGNAIRKVVDQGMQRAEVMIKGPGLGRDAALRAIRRSGILLSFVRDVTPMPHNGCRPPKKRRV.

Residues 1-22 form a disordered region; that stretch reads MAKPIPRIGSQRNRRINSRKNA. The segment covering 12–22 has biased composition (basic residues); sequence RNRRINSRKNA.

It belongs to the universal ribosomal protein uS11 family. In terms of assembly, part of the 30S ribosomal subunit.

The protein localises to the plastid. The protein resides in the chloroplast. The chain is Small ribosomal subunit protein uS11c from Fagopyrum esculentum subsp. ancestrale (Wild buckwheat).